Consider the following 228-residue polypeptide: Protein N-lysine methyltransferase METTL21D (228 aa).

Position 2 is an N-acetylalanine (Ala2). Residues Trp43, 75–77 (GSG), Asp96, Trp126, Ala142, and Tyr147 each bind S-adenosyl-L-methionine.

Belongs to the methyltransferase superfamily. METTL21 family. Interacts with ALKBH6. Interacts with ASPSCR1 and UBXN6; interaction with ASPSCR1, but not with UBXN6, enhances VCP methylation. In terms of tissue distribution, widely expressed.

The protein resides in the cytoplasm. The catalysed reaction is L-lysyl-[protein] + 3 S-adenosyl-L-methionine = N(6),N(6),N(6)-trimethyl-L-lysyl-[protein] + 3 S-adenosyl-L-homocysteine + 3 H(+). Its function is as follows. Protein N-lysine methyltransferase that specifically trimethylates 'Lys-315' of VCP/p97; this modification may decrease VCP ATPase activity. The polypeptide is Protein N-lysine methyltransferase METTL21D (Vcpkmt) (Mus musculus (Mouse)).